Here is a 404-residue protein sequence, read N- to C-terminus: Bifunctional enzyme IspD/IspF (404 aa).

Residues 1–243 (MQAEEQFSCG…KLTRMAIPDV (243 aa)) are 2-C-methyl-D-erythritol 4-phosphate cytidylyltransferase. The segment at 244–404 (RTGNGYDVHQ…TVVYASGGDA (161 aa)) is 2-C-methyl-D-erythritol 2,4-cyclodiphosphate synthase. A divalent metal cation contacts are provided by Asp-250 and His-252. Residues 250 to 252 (DVH) and 276 to 277 (HS) contribute to the 4-CDP-2-C-methyl-D-erythritol 2-phosphate site. Residue His-284 coordinates a divalent metal cation. Residues 298–300 (DIG), 374–377 (TTNE), Phe-381, and Arg-384 each bind 4-CDP-2-C-methyl-D-erythritol 2-phosphate.

This sequence in the N-terminal section; belongs to the IspD/TarI cytidylyltransferase family. IspD subfamily. It in the C-terminal section; belongs to the IspF family. A divalent metal cation is required as a cofactor.

The catalysed reaction is 2-C-methyl-D-erythritol 4-phosphate + CTP + H(+) = 4-CDP-2-C-methyl-D-erythritol + diphosphate. It carries out the reaction 4-CDP-2-C-methyl-D-erythritol 2-phosphate = 2-C-methyl-D-erythritol 2,4-cyclic diphosphate + CMP. The protein operates within isoprenoid biosynthesis; isopentenyl diphosphate biosynthesis via DXP pathway; isopentenyl diphosphate from 1-deoxy-D-xylulose 5-phosphate: step 2/6. Its pathway is isoprenoid biosynthesis; isopentenyl diphosphate biosynthesis via DXP pathway; isopentenyl diphosphate from 1-deoxy-D-xylulose 5-phosphate: step 4/6. In terms of biological role, bifunctional enzyme that catalyzes the formation of 4-diphosphocytidyl-2-C-methyl-D-erythritol from CTP and 2-C-methyl-D-erythritol 4-phosphate (MEP) (IspD), and catalyzes the conversion of 4-diphosphocytidyl-2-C-methyl-D-erythritol 2-phosphate (CDP-ME2P) to 2-C-methyl-D-erythritol 2,4-cyclodiphosphate (ME-CPP) with a corresponding release of cytidine 5-monophosphate (CMP) (IspF). This chain is Bifunctional enzyme IspD/IspF, found in Sinorhizobium medicae (strain WSM419) (Ensifer medicae).